Consider the following 273-residue polypeptide: MQIVHTPRELKEARIALKGSVGFVPTMGALHQGHLSLIEKSKEHNDYTIVSVFVNPTQFLPGEDFEKYPRRYEADKKICELAGVDILFMPQPDTIYSEDEVLVKAPHQKGYVLEGHFRPGHFDGVLQVVNKLFHIVLPTRAYFGKKDAQQLYLIQKMVQDFFMDIEIVPCEIVRDNDGLALSSRNVYLSDAERKKALLISKSLKRAAKMVQSGILDIQEIQKEMQNILQDLKVEYIAFVDRDFRPLQKIQIGKTIILVAAYVGSTRLIDNIWL.

27-34 is an ATP binding site; the sequence is MGALHQGH. Catalysis depends on His34, which acts as the Proton donor. Gln58 contacts (R)-pantoate. Residue Gln58 participates in beta-alanine binding. 144-147 lines the ATP pocket; it reads GKKD. Gln150 is a (R)-pantoate binding site. Residues Val173 and 181 to 184 each bind ATP; that span reads LSSR.

The protein belongs to the pantothenate synthetase family. In terms of assembly, homodimer.

The protein localises to the cytoplasm. The enzyme catalyses (R)-pantoate + beta-alanine + ATP = (R)-pantothenate + AMP + diphosphate + H(+). The protein operates within cofactor biosynthesis; (R)-pantothenate biosynthesis; (R)-pantothenate from (R)-pantoate and beta-alanine: step 1/1. Functionally, catalyzes the condensation of pantoate with beta-alanine in an ATP-dependent reaction via a pantoyl-adenylate intermediate. This Nitratiruptor sp. (strain SB155-2) protein is Pantothenate synthetase.